A 323-amino-acid polypeptide reads, in one-letter code: Queuosine 5'-phosphate N-glycosylase/hydrolase (323 aa).

Residues asparagine 72, tyrosine 93, lysine 199, phenylalanine 229, aspartate 231, aspartate 298, tryptophan 302, and glutamine 306 each coordinate queuosine 5'-phosphate. Aspartate 231 serves as the catalytic Nucleophile or transition state stabilizer.

Belongs to the QNG1 protein family. In terms of assembly, monomer.

The enzyme catalyses queuosine 5'-phosphate + H2O = queuine + D-ribose 5-phosphate. Functionally, catalyzes the hydrolysis of queuosine 5'-phosphate, releasing the nucleobase queuine (q). Is likely required for salvage of queuine from exogenous queuosine (Q) that is imported and then converted to queuosine 5'-phosphate intracellularly. In vitro, can also catalyze the release of the q base directly from Q as substrate; however, Q may not be the biologically relevant substrate. Shows a very low activity on queuosine 3',5'-diphosphate, and cannot release q from queuosine 3'-phosphate and from the 5'-nucleotides AMP, UMP, CMP or GMP, indicating specificity for the queuine base. The sequence is that of Queuosine 5'-phosphate N-glycosylase/hydrolase from Sphaerobacter thermophilus (strain ATCC 49802 / DSM 20745 / KCCM 41009 / NCIMB 13125 / S 6022).